The following is a 189-amino-acid chain: Elongation factor P (189 aa).

N6-(3,6-diaminohexanoyl)-5-hydroxylysine is present on lysine 34.

The protein belongs to the elongation factor P family. May be beta-lysylated on the epsilon-amino group of Lys-34 by the combined action of EpmA and EpmB, and then hydroxylated on the C5 position of the same residue by EpmC (if this protein is present). Lysylation is critical for the stimulatory effect of EF-P on peptide-bond formation. The lysylation moiety may extend toward the peptidyltransferase center and stabilize the terminal 3-CCA end of the tRNA. Hydroxylation of the C5 position on Lys-34 may allow additional potential stabilizing hydrogen-bond interactions with the P-tRNA.

It localises to the cytoplasm. It participates in protein biosynthesis; polypeptide chain elongation. Its function is as follows. Involved in peptide bond synthesis. Alleviates ribosome stalling that occurs when 3 or more consecutive Pro residues or the sequence PPG is present in a protein, possibly by augmenting the peptidyl transferase activity of the ribosome. Modification of Lys-34 is required for alleviation. The chain is Elongation factor P from Buchnera aphidicola subsp. Acyrthosiphon pisum (strain APS) (Acyrthosiphon pisum symbiotic bacterium).